The following is a 238-amino-acid chain: Ribonuclease PH (238 aa).

Phosphate-binding positions include R86 and 124 to 126 (GTR).

This sequence belongs to the RNase PH family. Homohexameric ring arranged as a trimer of dimers.

The catalysed reaction is tRNA(n+1) + phosphate = tRNA(n) + a ribonucleoside 5'-diphosphate. Functionally, phosphorolytic 3'-5' exoribonuclease that plays an important role in tRNA 3'-end maturation. Removes nucleotide residues following the 3'-CCA terminus of tRNAs; can also add nucleotides to the ends of RNA molecules by using nucleoside diphosphates as substrates, but this may not be physiologically important. Probably plays a role in initiation of 16S rRNA degradation (leading to ribosome degradation) during starvation. This is Ribonuclease PH from Phenylobacterium zucineum (strain HLK1).